The following is a 43-amino-acid chain: Protein PsbN (43 aa).

Residues leucine 5 to isoleucine 25 traverse the membrane as a helical segment.

Belongs to the PsbN family.

The protein localises to the plastid. The protein resides in the chloroplast thylakoid membrane. In terms of biological role, may play a role in photosystem I and II biogenesis. The protein is Protein PsbN of Cyanidium caldarium (Red alga).